A 461-amino-acid polypeptide reads, in one-letter code: Bifunctional protein GlmU (461 aa).

Residues 1-236 (MNVLLQELFI…VFEIFGINNR (236 aa)) are pyrophosphorylase. UDP-N-acetyl-alpha-D-glucosamine is bound by residues lysine 27, glutamine 80, 85 to 86 (GT), 109 to 111 (YGD), glycine 146, glutamate 160, asparagine 175, and asparagine 234. Mg(2+) is bound at residue aspartate 111. Asparagine 234 lines the Mg(2+) pocket. The segment at 237–257 (FQLMKLEKIYQIEQAKKLLLN) is linker. The tract at residues 258–461 (GVTLSDYNRF…SILRKENNSK (204 aa)) is N-acetyltransferase. Residue lysine 358 participates in UDP-N-acetyl-alpha-D-glucosamine binding. Histidine 370 (proton acceptor) is an active-site residue. UDP-N-acetyl-alpha-D-glucosamine contacts are provided by tyrosine 373 and asparagine 384. 3 residues coordinate acetyl-CoA: alanine 387, alanine 430, and arginine 447.

In the N-terminal section; belongs to the N-acetylglucosamine-1-phosphate uridyltransferase family. It in the C-terminal section; belongs to the transferase hexapeptide repeat family. In terms of assembly, homotrimer. Mg(2+) serves as cofactor.

Its subcellular location is the cytoplasm. The enzyme catalyses alpha-D-glucosamine 1-phosphate + acetyl-CoA = N-acetyl-alpha-D-glucosamine 1-phosphate + CoA + H(+). It carries out the reaction N-acetyl-alpha-D-glucosamine 1-phosphate + UTP + H(+) = UDP-N-acetyl-alpha-D-glucosamine + diphosphate. Its pathway is nucleotide-sugar biosynthesis; UDP-N-acetyl-alpha-D-glucosamine biosynthesis; N-acetyl-alpha-D-glucosamine 1-phosphate from alpha-D-glucosamine 6-phosphate (route II): step 2/2. It functions in the pathway nucleotide-sugar biosynthesis; UDP-N-acetyl-alpha-D-glucosamine biosynthesis; UDP-N-acetyl-alpha-D-glucosamine from N-acetyl-alpha-D-glucosamine 1-phosphate: step 1/1. The protein operates within bacterial outer membrane biogenesis; LPS lipid A biosynthesis. In terms of biological role, catalyzes the last two sequential reactions in the de novo biosynthetic pathway for UDP-N-acetylglucosamine (UDP-GlcNAc). The C-terminal domain catalyzes the transfer of acetyl group from acetyl coenzyme A to glucosamine-1-phosphate (GlcN-1-P) to produce N-acetylglucosamine-1-phosphate (GlcNAc-1-P), which is converted into UDP-GlcNAc by the transfer of uridine 5-monophosphate (from uridine 5-triphosphate), a reaction catalyzed by the N-terminal domain. The sequence is that of Bifunctional protein GlmU from Wigglesworthia glossinidia brevipalpis.